Here is a 450-residue protein sequence, read N- to C-terminus: MDADRIVFRSNNQVVSLRPEIIADQYEYKYPAIKDLKKPCITLGKAPDLNKAYKSVLSGMNAAKLDPDDVCSYLAAAMQFFEGTCPEDWTSYGILIARKGDKITPNSLVEIKRNDVEGNWALTGGMEMTRDPTVSEHASLVGLLLSLYRLSKISGQNTGNYKTNIADRIEQIFETAPFVKIVEHHTLMTTHKMCANWSTIPNFRFLAGTYDMFFSRIEHLYSAIRVGTVVTAYEDCSGLVSFTGFIKQINLTAREAILYFFHKNFEEEIRRMFEPGQETAVPHSYFIHFRSLGLSGKSPYSSNAVGHVFNLIHFVGCYMGQIRSLNATVIAACAPHEMSVLGGYLGEEFFGRGTFERRFFRDEKELQEYEAAELTKTDVALADDGTVDSDDEDYFSGEARGPEAVYARIMMNGGRLKRSHIRRYVSVSSNHQARPNSFAEFLNKTYSSDS.

Phosphoserine; by host CK2 is present on Ser-389.

Belongs to the lyssavirus nucleocapsid protein family. Homomultimerizes to form the nucleocapsid. Binds to viral genomic RNA. In nucleocapsid, binds protein P and thereby positions the polymerase on the template. Protein P acts as a chaperone on free protein N to prevent it from aggregation before encapsidating genomic RNA. Phosphorylated by host CK2. Unphosphorylated protein N seems to have a better affinity for leader viral promoter encapsidation. Phosphorylation of protein N in ribonucleocapsid may stabilize the interaction with protein P, thereby playing an important role in viral transcription/replication.

The protein localises to the virion. It localises to the host cytoplasm. Functionally, encapsidates the genome in a ratio of one protein N per nine ribonucleotides, protecting it from nucleases. If expressed without protein P it binds non-specifically RNA and therefore can bind it's own mRNA. Interaction with protein P abolishes any non-specific RNA binding, and prevents phosphorylation. The soluble N-P complex encapsidates specifically the genomic RNA, with protein N protecting the genome like a pearl necklace. The encapsidated genomic RNA is termed the nucleocapsid (NC) and serves as template for viral transcription and replication. Protein N binds protein P in the NC through a different interaction, and can be phosphorylated. Subsequent viral replication is dependent on intracellular concentration of newly synthesized protein N. During replication, encapsidation by protein N is coupled to RNA synthesis and all replicative products are resistant to nucleases. The protein is Nucleoprotein (N) of Rabies virus (strain Nishigahara RCEH) (RABV).